A 309-amino-acid polypeptide reads, in one-letter code: Glycine--tRNA ligase alpha subunit (309 aa).

The protein belongs to the class-II aminoacyl-tRNA synthetase family. In terms of assembly, tetramer of two alpha and two beta subunits.

The protein localises to the cytoplasm. The catalysed reaction is tRNA(Gly) + glycine + ATP = glycyl-tRNA(Gly) + AMP + diphosphate. The polypeptide is Glycine--tRNA ligase alpha subunit (Anaeromyxobacter sp. (strain K)).